A 192-amino-acid chain; its full sequence is dTTP/UTP pyrophosphatase (192 aa).

Asp-71 functions as the Proton acceptor in the catalytic mechanism.

Belongs to the Maf family. YhdE subfamily. A divalent metal cation is required as a cofactor.

The protein resides in the cytoplasm. It carries out the reaction dTTP + H2O = dTMP + diphosphate + H(+). It catalyses the reaction UTP + H2O = UMP + diphosphate + H(+). Functionally, nucleoside triphosphate pyrophosphatase that hydrolyzes dTTP and UTP. May have a dual role in cell division arrest and in preventing the incorporation of modified nucleotides into cellular nucleic acids. In Clostridium tetani (strain Massachusetts / E88), this protein is dTTP/UTP pyrophosphatase.